We begin with the raw amino-acid sequence, 334 residues long: Replication-associated protein (334 aa).

The CRESS-DNA virus Rep endonuclease domain occupies arginine 9–phenylalanine 111. Residues phenylalanine 16–tyrosine 19 carry the RCR-1 motif. Residues glutamate 50, histidine 58, and histidine 60 each contribute to the a divalent metal cation site. The RCR-2 signature appears at histidine 58–histidine 60. The For DNA cleavage activity role is filled by tyrosine 98. The short motif at tyrosine 98–lysine 101 is the RCR-3 element. Position 102 (aspartate 102) interacts with a divalent metal cation. The segment at serine 160–tyrosine 172 is oligomerization. Glycine 213 to threonine 220 is a binding site for ATP. Positions isoleucine 236–proline 254 are transactivation. Positions lysine 276–glycine 286 match the Nuclear localization signal motif.

This sequence belongs to the geminiviridae Rep protein family. As to quaternary structure, homooligomer. Rep binds to repeated DNA motifs (iterons). Forms the O-complex, which is a Rep-DNA complex involved in the initiation of RCR. Part of the C- and V-complexes which are RepA-Rep-DNA complexes involved in the c-sense and v-sense transcription. Mg(2+) is required as a cofactor. Requires Mn(2+) as cofactor.

It localises to the host nucleus. Functionally, essential for the replication of viral ssDNA. The closed circular ssDNA genome is first converted to a superhelical dsDNA. Rep binds a specific region at the genome origin of replication. It introduces an endonucleolytic nick within the conserved sequence 5'-TAATATTAC-3' in the intergenic region of the genome present in all geminiviruses, thereby initiating the rolling circle replication (RCR). Following cleavage, binds covalently to the 5'-phosphate of DNA as a tyrosyl ester. The cleavage gives rise to a free 3'-OH that serves as a primer for the cellular DNA polymerase. The polymerase synthesizes the (+) strand DNA by rolling circle mechanism. After one round of replication, a Rep-catalyzed nucleotidyl transfer reaction releases a circular single-stranded virus genome, thereby terminating the replication. Displays origin-specific DNA cleavage, nucleotidyl transferase, ATPase and helicase activities. Acts a an inhibitor of C-sense gene transcription. The polypeptide is Replication-associated protein (Phaseolus vulgaris (Kidney bean)).